Reading from the N-terminus, the 288-residue chain is MPLITGKTKLLGVIGDPVEHSLSPVMHNAVIDHLNLNYIYVPFAVKPEDLRTAIAGLEAIGVVGFNLTIPHKQTIIPLLSTISETAQLVGAVNTVWRTETGWSGTNTDVHGFLAPLKRLNLPWSQVSPVILGNGGAARAVVVGCYEMGCRQISVVGRTKEKLDHFYQSWQNTPIQEALRVYLWEDLPQLVSKTQLLINTTPLGMSPHIDQSPVDLTVMKKLQPGAIAYDLIYTPNPTLFLKEAQQQGAIIIDGLEMLAQQGALALSIWIKQSVPVEIMSQSLRDYLNL.

Shikimate-binding positions include 21 to 23 (SLS) and T68. K72 (proton acceptor) is an active-site residue. Residue E84 coordinates NADP(+). Shikimate-binding residues include N93 and D108. NADP(+) contacts are provided by residues 132–136 (GNGGA) and L230. Y232 contributes to the shikimate binding site. Residue G253 participates in NADP(+) binding.

Belongs to the shikimate dehydrogenase family. In terms of assembly, homodimer.

The enzyme catalyses shikimate + NADP(+) = 3-dehydroshikimate + NADPH + H(+). It participates in metabolic intermediate biosynthesis; chorismate biosynthesis; chorismate from D-erythrose 4-phosphate and phosphoenolpyruvate: step 4/7. Its function is as follows. Involved in the biosynthesis of the chorismate, which leads to the biosynthesis of aromatic amino acids. Catalyzes the reversible NADPH linked reduction of 3-dehydroshikimate (DHSA) to yield shikimate (SA). This chain is Shikimate dehydrogenase (NADP(+)), found in Gloeothece citriformis (strain PCC 7424) (Cyanothece sp. (strain PCC 7424)).